A 129-amino-acid polypeptide reads, in one-letter code: UPF0325 protein YE3288 (129 aa).

It belongs to the UPF0325 family.

The chain is UPF0325 protein YE3288 from Yersinia enterocolitica serotype O:8 / biotype 1B (strain NCTC 13174 / 8081).